We begin with the raw amino-acid sequence, 298 residues long: 4-hydroxy-tetrahydrodipicolinate synthase (298 aa).

Threonine 51 provides a ligand contact to pyruvate. Tyrosine 139 acts as the Proton donor/acceptor in catalysis. Lysine 167 functions as the Schiff-base intermediate with substrate in the catalytic mechanism. Pyruvate is bound at residue isoleucine 209.

Belongs to the DapA family. As to quaternary structure, homotetramer; dimer of dimers.

It localises to the cytoplasm. The catalysed reaction is L-aspartate 4-semialdehyde + pyruvate = (2S,4S)-4-hydroxy-2,3,4,5-tetrahydrodipicolinate + H2O + H(+). Its pathway is amino-acid biosynthesis; L-lysine biosynthesis via DAP pathway; (S)-tetrahydrodipicolinate from L-aspartate: step 3/4. Functionally, catalyzes the condensation of (S)-aspartate-beta-semialdehyde [(S)-ASA] and pyruvate to 4-hydroxy-tetrahydrodipicolinate (HTPA). The polypeptide is 4-hydroxy-tetrahydrodipicolinate synthase (Haemophilus influenzae (strain ATCC 51907 / DSM 11121 / KW20 / Rd)).